An 846-amino-acid polypeptide reads, in one-letter code: Neurofilament medium polypeptide (846 aa).

A compositionally biased stretch (polar residues) spans 1 to 10 (MSYTLDSLGN). The segment at 1–52 (MSYTLDSLGNPSAYRRVPTETRSSFSRVSGSPSSGFRSQSWSRGSPSTVSSS) is disordered. Serine 2 carries the N-acetylserine modification. Residues 2-104 (SYTLDSLGNP…LSRSNEKEQL (103 aa)) are head. The segment covering 22 to 45 (RSSFSRVSGSPSSGFRSQSWSRGS) has biased composition (low complexity). Serine 31 carries the post-translational modification Phosphoserine. Arginine 43 bears the Omega-N-methylarginine mark. A glycan (O-linked (GlcNAc) threonine) is linked at threonine 48. Position 98 is a phosphoserine (serine 98). The region spanning 100 to 411 (EKEQLQGLND…KLLEGEETRF (312 aa)) is the IF rod domain. Positions 104-135 (LQGLNDRFAGYIEKVHYLEQQNKEIEAEIHAL) are coil 1A. Residues 136 to 148 (RQKQASHAQLGDA) form a linker 1 region. The interval 149 to 247 (YDQEIRELRA…EEEVADLLAQ (99 aa)) is coil 1B. The residue at position 225 (serine 225) is a Phosphoserine. The tract at residues 248 to 264 (IQASHITVERKDYLKTD) is linker 12. Residues 265-286 (ISTALKEIRSQLECHSDQNMHQ) are coil 2A. Positions 287-290 (AEEW) are linker 2. A coil 2B region spans residues 291 to 411 (FKCRYAKLTE…KLLEGEETRF (121 aa)). Tyrosine 319 is subject to Phosphotyrosine. Serine 345, serine 417, and serine 429 each carry phosphoserine. Positions 412 to 845 (STFSGSITGP…HAIVKEVTQG (434 aa)) are tail. O-linked (GlcNAc) threonine glycosylation is present at threonine 431. Serine 467 and serine 483 each carry phosphoserine. The segment at 483–783 (SAKEEKEEAE…GEDRSDDKVV (301 aa)) is disordered. Acidic residues predominate over residues 489-499 (EEAEEKEEEPE). Residues 500-510 (VEKSPVKSPEA) are compositionally biased toward basic and acidic residues. Residues serine 503 and serine 507 each carry the phosphoserine modification. The segment covering 511–533 (KEEEEGEKEEEEEGQEEEEEEDE) has biased composition (acidic residues). The span at 534 to 553 (GVKSDQAEEGGSEKEGSSEK) shows a compositional bias: basic and acidic residues. Serine 537, serine 545, serine 550, and serine 551 each carry phosphoserine. Over residues 554–575 (DEGEQEEEGETEAEGEGEEAEA) the composition is skewed to acidic residues. Threonine 564 bears the Phosphothreonine mark. A compositionally biased stretch (basic and acidic residues) spans 576 to 603 (KEEKKTEGKVEEMAIKEEIKVEKPEKAK). Phosphoserine occurs at positions 604, 609, 643, 667, 687, 713, 721, 751, and 767. Basic and acidic residues-rich tracts occupy residues 610-675 (PVEE…KAVE) and 687-709 (SLEK…KAEE). 2 stretches are compositionally biased toward basic and acidic residues: residues 718 to 730 (GDKS…KEDI) and 746 to 758 (TQEK…EEKG). Basic and acidic residues predominate over residues 769 to 783 (AEEKKGEDRSDDKVV).

Belongs to the intermediate filament family. As to quaternary structure, forms heterodimers with NEFL; which can further hetero-oligomerize (in vitro). Forms heterodimers with INA (in vitro). Post-translationally, there are a number of repeats of the tripeptide K-S-P, NFM is phosphorylated on a number of the serines in this motif. It is thought that phosphorylation of NFM results in the formation of interfilament cross bridges that are important in the maintenance of axonal caliber. Phosphorylation seems to play a major role in the functioning of the larger neurofilament polypeptides (NF-M and NF-H), the levels of phosphorylation being altered developmentally and coincidentally with a change in the neurofilament function. In terms of processing, phosphorylated in the head and rod regions by the PKC kinase PKN1, leading to the inhibition of polymerization. Expressed in the dorsal root ganglion neurons (at protein level).

Its subcellular location is the cytoplasm. It is found in the cytoskeleton. The protein localises to the cell projection. The protein resides in the axon. Neurofilaments usually contain three intermediate filament proteins: NEFL, NEFM, and NEFH which are involved in the maintenance of neuronal caliber. May additionally cooperate with the neuronal intermediate filament proteins PRPH and INA to form neuronal filamentous networks. The sequence is that of Neurofilament medium polypeptide (Nefm) from Rattus norvegicus (Rat).